The following is a 46-amino-acid chain: Large ribosomal subunit protein bL36 (46 aa).

This sequence belongs to the bacterial ribosomal protein bL36 family.

This is Large ribosomal subunit protein bL36 from Salmonella agona (strain SL483).